The following is a 432-amino-acid chain: Glutamyl-tRNA reductase (432 aa).

Substrate-binding positions include 49-52, Ser101, 106-108, and Gln112; these read TCNR and EPQ. The active-site Nucleophile is the Cys50. 181 to 186 serves as a coordination point for NADP(+); sequence GAGETI. The tract at residues 407–432 is disordered; the sequence is FPEKPGYQHPPIATPIVRTDDADPAP.

Belongs to the glutamyl-tRNA reductase family. As to quaternary structure, homodimer.

The enzyme catalyses (S)-4-amino-5-oxopentanoate + tRNA(Glu) + NADP(+) = L-glutamyl-tRNA(Glu) + NADPH + H(+). It participates in porphyrin-containing compound metabolism; protoporphyrin-IX biosynthesis; 5-aminolevulinate from L-glutamyl-tRNA(Glu): step 1/2. Catalyzes the NADPH-dependent reduction of glutamyl-tRNA(Glu) to glutamate 1-semialdehyde (GSA). This chain is Glutamyl-tRNA reductase, found in Xanthomonas oryzae pv. oryzae (strain MAFF 311018).